Here is a 1194-residue protein sequence, read N- to C-terminus: F-box only protein 38 (1194 aa).

The F-box domain occupies Met-30–Asp-75. The tract at residues Lys-59 to Arg-119 is interaction with KLF7. Short sequence motifs (nuclear export signal) lie at residues Leu-194–Val-201, Leu-307–Ile-316, and Leu-451–Leu-460. 4 disordered regions span residues Ala-487–Asp-529, Glu-577–Ser-776, Arg-793–Ser-879, and Lys-896–Asp-915. Over residues Asn-493 to His-510 the composition is skewed to low complexity. A Phosphothreonine modification is found at Thr-592. Ser-599, Ser-601, and Ser-607 each carry phosphoserine. Over residues Ser-599–Glu-609 the composition is skewed to acidic residues. Composition is skewed to basic and acidic residues over residues Arg-622–Gly-631 and Ile-683–Asp-701. A compositionally biased stretch (low complexity) spans Ser-705–Ser-728. Residues Ser-742 and Ser-746 each carry the phosphoserine modification. Positions Glu-764 to Ala-774 are enriched in acidic residues. The span at Arg-793–Ser-804 shows a compositional bias: basic and acidic residues. Residues Ser-855–Glu-867 show a composition bias toward polar residues. A compositionally biased stretch (basic residues) spans Lys-896–Thr-906. The Nuclear localization signal signature appears at Lys-902–Arg-905.

Part of the SCF (SKP1-CUL1-F-box) E3 ubiquitin-protein ligase complex SCF(FBXO38) composed of CUL1, SKP1, RBX1 and FBXO38. Interacts with KLF7. Interacts with PDCD1/PD-1. As to expression, expressed at high levels in embryo (developing brain, spinal cord, branchial arms and limbs). Widely expressed at low levels in adult tissues, with highest expression in testis. Expressed in postmeiotic spermatids.

The protein resides in the cytoplasm. It localises to the cytosol. The protein localises to the nucleus. The protein operates within protein modification; protein ubiquitination. Substrate recognition component of a SCF (SKP1-CUL1-F-box protein) E3 ubiquitin-protein ligase complex which mediates the ubiquitination and subsequent proteasomal degradation of PDCD1/PD-1, thereby regulating T-cells-mediated immunity. Required for anti-tumor activity of T-cells by promoting the degradation of PDCD1/PD-1; the PDCD1-mediated inhibitory pathway being exploited by tumors to attenuate anti-tumor immunity and facilitate tumor survival. May indirectly stimulate the activity of transcription factor KLF7, a regulator of neuronal differentiation, without promoting KLF7 ubiquitination. This is F-box only protein 38 from Mus musculus (Mouse).